Reading from the N-terminus, the 237-residue chain is Putative N-acetylmannosamine-6-phosphate 2-epimerase (237 aa).

It belongs to the NanE family.

The enzyme catalyses an N-acyl-D-glucosamine 6-phosphate = an N-acyl-D-mannosamine 6-phosphate. It functions in the pathway amino-sugar metabolism; N-acetylneuraminate degradation; D-fructose 6-phosphate from N-acetylneuraminate: step 3/5. In terms of biological role, converts N-acetylmannosamine-6-phosphate (ManNAc-6-P) to N-acetylglucosamine-6-phosphate (GlcNAc-6-P). The protein is Putative N-acetylmannosamine-6-phosphate 2-epimerase of Listeria monocytogenes serovar 1/2a (strain ATCC BAA-679 / EGD-e).